The following is a 69-amino-acid chain: U2-agatoxin-Ao1w (69 aa).

The first 20 residues, 1–20 (MRAIISLLLISAMVFSMIEA), serve as a signal peptide directing secretion. A propeptide spanning residues 21 to 34 (VPVEEGLQLFEGER) is cleaved from the precursor. Disulfide bonds link Cys37/Cys53, Cys44/Cys58, and Cys52/Cys68.

The protein belongs to the neurotoxin 01 (U2-agtx) family. Expressed by the venom gland.

It localises to the secreted. In terms of biological role, insect active toxin causing rapid but reversible paralysis in crickets. No activity shown in mammals. Does not show effect on mammalian voltage-gated calcium channels. This chain is U2-agatoxin-Ao1w, found in Agelena orientalis (Funnel-web spider).